A 78-amino-acid polypeptide reads, in one-letter code: uncharacterized protein (78 aa).

This is an uncharacterized protein from Archaeoglobus fulgidus (strain ATCC 49558 / DSM 4304 / JCM 9628 / NBRC 100126 / VC-16).